Consider the following 742-residue polypeptide: Two pore calcium channel protein 1 (742 aa).

Residues 1-37 (MSEAEAPLITEEAAERGLASSGSRRLSDGAGGQGSRK) are disordered. Topologically, residues 1–82 (MSEAEAPLIT…NDTRFGRAMS (82 aa)) are cytoplasmic. Residues 83–103 (FYFVYLRLDWLWSLNLFALIL) traverse the membrane as a helical segment. Over 104–140 (LNFLEKPLWCRKDALQAYDQRDLYFLGQLPYFSKTES) the chain is Extracellular. A helical membrane pass occupies residues 141-161 (LIYEGLTLVILVMDIFCPLSY). Over 162-176 (EGLNIFWRSTTNKLK) the chain is Cytoplasmic. The helical transmembrane segment at 177-197 (IVLLFILACDILVFAFSSQPF) threads the bilayer. The Extracellular portion of the chain corresponds to 198–204 (RLAPYIR). The chain crosses the membrane as a helical; Voltage-sensor span at residues 205 to 226 (VVFLIMTIRELRMCAITLAGLI). A helical transmembrane segment spans residues 227-247 (GTYLNVLALSLLFLLFASWLA). The Extracellular portion of the chain corresponds to 248–258 (YVTFEDTPQGK). Positions 259-273 (TIFSSYGVTLYQMFV) form an intramembrane region, pore-forming. Residues 274-296 (LFTTSNNPDVWVHAYKIPRWYSL) lie on the Extracellular side of the membrane. Residues 297–317 (FFIVYVLLGVYFLTNLILAVI) traverse the membrane as a helical segment. At 318-446 (YDSFKEQFAK…SFVRSRMFEY (129 aa)) the chain is on the cytoplasmic side. 2 EF-hand domains span residues 335-370 (IRKNILQKAFDLIDTNNRGYLDREQCISLLNELNKY) and 376-411 (TSREDFELIFAELDRSGDFKVTSEEFADLCNTIAIK). The helical transmembrane segment at 447-467 (IIVFVLLINLVAVIIETTLDI) threads the bilayer. The Extracellular portion of the chain corresponds to 468 to 480 (ENSSSQETWQEVE). Asn-469 is a glycosylation site (N-linked (GlcNAc...) asparagine). The helical transmembrane segment at 481–501 (FFLGWIYVAEMALKIFSLGFG) threads the bilayer. The Cytoplasmic segment spans residues 502–510 (AYWMEGQNK). Residues 511–531 (FDFVLTWTIFIGETLTFAFPS) traverse the membrane as a helical segment. Topologically, residues 532 to 540 (KLPFLSNGE) are extracellular. Residues 541-558 (WIRYLLLGRVLRLTRILL) form a helical; Voltage-sensor membrane-spanning segment. The Cytoplasmic segment spans residues 559–582 (QVQRFRAFVATFFTLMSSLMPYLG). The chain crosses the membrane as a helical span at residues 583-603 (IVFCVLCMYCSIGLQIFGGIV). Over 604 to 627 (YAGNPTLEETDLFNNDYLLFNFND) the chain is Extracellular. An intramembrane region (pore-forming) is located at residues 628 to 642 (YPSGMVTLFNLLVMG). The Extracellular portion of the chain corresponds to 643-663 (NWQVWMESYWQLTGTSWSLIY). A helical transmembrane segment spans residues 664–684 (FVSFYLISILLLLNLIVAFVL). At 685-742 (EAFFAEMELEKGEEVDIQNPTSGGIKKRRSMRVRSKGTMVDILLHHMLSNELDGSQNS) the chain is on the cytoplasmic side.

This sequence belongs to the calcium channel alpha-1 subunit (TC 1.A.1.11) family. Two pore calcium channel subfamily. Homodimer.

It localises to the membrane. Inhibited by Al(3+). In terms of biological role, functions as a voltage-gated inward-rectifying Ca(2+) channel (VDCC) across the plasma membrane that mediates sucrose-induced Ca(2+) influx in autotrophically grown leaf cells. Acts as the major ROS-responsive Ca(2+) channel and is the possible target of Al-dependent inhibition. Plays a regulatory role in defense responses. The protein is Two pore calcium channel protein 1 (TPC1) of Triticum aestivum (Wheat).